The sequence spans 97 residues: Co-chaperonin GroES (97 aa).

This sequence belongs to the GroES chaperonin family. Heptamer of 7 subunits arranged in a ring. Interacts with the chaperonin GroEL.

The protein localises to the cytoplasm. Functionally, together with the chaperonin GroEL, plays an essential role in assisting protein folding. The GroEL-GroES system forms a nano-cage that allows encapsulation of the non-native substrate proteins and provides a physical environment optimized to promote and accelerate protein folding. GroES binds to the apical surface of the GroEL ring, thereby capping the opening of the GroEL channel. This Pseudomonas putida (Arthrobacter siderocapsulatus) protein is Co-chaperonin GroES.